The sequence spans 187 residues: MAMAKGLIFLGAPGSGKGTQAVGLAETLGIPHISTGDMLRQAIADGTELGNQAKGYMDKGELVPDQLILGLIEERLGHKDAKAGWILDGFPRNVNQAIFLDELLVNIGHRTHWVINLKVPDEVIVERLLARGRADDNETTIRNRLLVYTEQTAPLMAYYQEQGKLYSLDGNQPVEAIATNLEKLVKP.

14–19 is an ATP binding site; sequence GSGKGT. The segment at 34–63 is NMP; it reads STGDMLRQAIADGTELGNQAKGYMDKGELV. Residues Thr-35, Arg-40, 61-63, 89-92, and Gln-96 each bind AMP; these read ELV and GFPR. The segment at 130-136 is LID; that stretch reads ARGRADD. Arg-131 is a binding site for ATP. AMP contacts are provided by Arg-133 and Arg-144. Gln-172 provides a ligand contact to ATP.

The protein belongs to the adenylate kinase family. As to quaternary structure, monomer.

The protein resides in the cytoplasm. The enzyme catalyses AMP + ATP = 2 ADP. Its pathway is purine metabolism; AMP biosynthesis via salvage pathway; AMP from ADP: step 1/1. Catalyzes the reversible transfer of the terminal phosphate group between ATP and AMP. Plays an important role in cellular energy homeostasis and in adenine nucleotide metabolism. This chain is Adenylate kinase 1, found in Synechocystis sp. (strain ATCC 27184 / PCC 6803 / Kazusa).